A 284-amino-acid chain; its full sequence is Proteasome subunit beta 1 (284 aa).

The propeptide at 1–56 (MASHDSYTGRLPGAFMNPGTSSFTEFLASYNPDLLPGRHMTALAGGMPGNVEAPHA) is removed in mature form; by autocatalysis. Catalysis depends on Thr-57, which acts as the Nucleophile.

This sequence belongs to the peptidase T1B family. As to quaternary structure, the 20S proteasome core is composed of 14 alpha and 14 beta subunits that assemble into four stacked heptameric rings, resulting in a barrel-shaped structure. The two inner rings, each composed of seven catalytic beta subunits, are sandwiched by two outer rings, each composed of seven alpha subunits. The catalytic chamber with the active sites is on the inside of the barrel. Has a gated structure, the ends of the cylinder being occluded by the N-termini of the alpha-subunits. Is capped by the proteasome-associated ATPase, ARC.

The protein resides in the cytoplasm. The enzyme catalyses Cleavage of peptide bonds with very broad specificity.. It participates in protein degradation; proteasomal Pup-dependent pathway. The formation of the proteasomal ATPase ARC-20S proteasome complex, likely via the docking of the C-termini of ARC into the intersubunit pockets in the alpha-rings, may trigger opening of the gate for substrate entry. Interconversion between the open-gate and close-gate conformations leads to a dynamic regulation of the 20S proteasome proteolysis activity. Its function is as follows. Component of the proteasome core, a large protease complex with broad specificity involved in protein degradation. The chain is Proteasome subunit beta 1 from Thermomonospora curvata (strain ATCC 19995 / DSM 43183 / JCM 3096 / KCTC 9072 / NBRC 15933 / NCIMB 10081 / Henssen B9).